We begin with the raw amino-acid sequence, 514 residues long: 2,3-bisphosphoglycerate-independent phosphoglycerate mutase (514 aa).

Mn(2+) contacts are provided by aspartate 14 and serine 64. Serine 64 acts as the Phosphoserine intermediate in catalysis. Substrate contacts are provided by residues histidine 125, 155 to 156 (RD), arginine 187, arginine 193, 263 to 266 (RADR), and lysine 336. 5 residues coordinate Mn(2+): aspartate 403, histidine 407, aspartate 444, histidine 445, and histidine 463.

It belongs to the BPG-independent phosphoglycerate mutase family. As to quaternary structure, monomer. Requires Mn(2+) as cofactor.

The catalysed reaction is (2R)-2-phosphoglycerate = (2R)-3-phosphoglycerate. The protein operates within carbohydrate degradation; glycolysis; pyruvate from D-glyceraldehyde 3-phosphate: step 3/5. In terms of biological role, catalyzes the interconversion of 2-phosphoglycerate and 3-phosphoglycerate. This chain is 2,3-bisphosphoglycerate-independent phosphoglycerate mutase, found in Shewanella putrefaciens (strain CN-32 / ATCC BAA-453).